Consider the following 153-residue polypeptide: MSGNAQKKAASRSMATKKLIIDEFKRRLRDNIKSLNDNFYHIIQAAKVNPDDNAFKNQTGKMTEFYTIKNEMAVRAQLMVRASDELLRLTTDLKEFLILHDFHFLTHNIKQAESQCEDTLRQQSHLHQALDTDVSNMLFALEEEIADNFFLGH.

This sequence belongs to the Mediator complex subunit 22 family. Component of the Mediator complex.

The protein localises to the nucleus. Component of the Mediator complex, a coactivator involved in the regulated transcription of nearly all RNA polymerase II-dependent genes. Mediator functions as a bridge to convey information from gene-specific regulatory proteins to the basal RNA polymerase II transcription machinery. Mediator is recruited to promoters by direct interactions with regulatory proteins and serves as a scaffold for the assembly of a functional preinitiation complex with RNA polymerase II and the general transcription factors. The polypeptide is Mediator of RNA polymerase II transcription subunit 22 (mdt-22) (Caenorhabditis briggsae).